Here is a 175-residue protein sequence, read N- to C-terminus: NADH-quinone oxidoreductase subunit B (175 aa).

Positions 54, 55, 119, and 149 each coordinate [4Fe-4S] cluster.

It belongs to the complex I 20 kDa subunit family. NDH-1 is composed of at least 14 different subunits, Nqo1 to Nqo14. The complex has a L-shaped structure, with the hydrophobic arm (subunits Nqo7, Nqo8, Nqo10 to Nqo14) embedded in the inner membrane and the hydrophilic peripheral arm (subunits Nqo1 to Nqo6, Nqo9) protruding into the bacterial cytoplasm. The hydrophilic domain contains all the redox centers. NADH-quinone oxidoreductase forms a supercomplex with ubiquinol-cytochrome c reductase complex (complex III or cytochrome b-c1 complex) and cytochrome c oxidase (complex IV), which stabilizes the NADH-quinone oxidoreductase complex. Requires [4Fe-4S] cluster as cofactor.

It is found in the cell inner membrane. The enzyme catalyses a quinone + NADH + 5 H(+)(in) = a quinol + NAD(+) + 4 H(+)(out). In terms of biological role, NDH-1 shuttles electrons from NADH, via FMN and iron-sulfur (Fe-S) centers, to quinones in the respiratory chain. The immediate electron acceptor for the enzyme in this species is believed to be ubiquinone. Couples the redox reaction to proton translocation (for every two electrons transferred, four hydrogen ions are translocated across the cytoplasmic membrane), and thus conserves the redox energy in a proton gradient. In Paracoccus denitrificans (strain Pd 1222), this protein is NADH-quinone oxidoreductase subunit B.